Reading from the N-terminus, the 203-residue chain is Glycerol-3-phosphate acyltransferase (203 aa).

4 consecutive transmembrane segments (helical) span residues leucine 6 to valine 26, alanine 82 to phenylalanine 102, alanine 118 to isoleucine 138, and tyrosine 141 to aspartate 161.

The protein belongs to the PlsY family. In terms of assembly, probably interacts with PlsX.

It is found in the cell inner membrane. The catalysed reaction is an acyl phosphate + sn-glycerol 3-phosphate = a 1-acyl-sn-glycero-3-phosphate + phosphate. It functions in the pathway lipid metabolism; phospholipid metabolism. In terms of biological role, catalyzes the transfer of an acyl group from acyl-phosphate (acyl-PO(4)) to glycerol-3-phosphate (G3P) to form lysophosphatidic acid (LPA). This enzyme utilizes acyl-phosphate as fatty acyl donor, but not acyl-CoA or acyl-ACP. This Shewanella sp. (strain MR-7) protein is Glycerol-3-phosphate acyltransferase.